We begin with the raw amino-acid sequence, 298 residues long: Glutamate/glycine mitochondrial carrier ymc1 (298 aa).

Solcar repeat units lie at residues 14–98 (TKDF…CKRF), 106–193 (VTMP…LVKN), and 206–294 (TPGW…VSQH). 6 helical membrane-spanning segments follow: residues 17-37 (FLAGVSGGVAQVLVGQPFDCV), 67-87 (LAAFYKGTVLPLLGIGFCVSI), 112-132 (YVSGAISGLANSFLVGPVEHV), 172-192 (TAAREAHGLGMYFLAYEALVK), 212-232 (CVFGAGAGYAMWLAAYPFDIV), and 266-287 (FYRGFVPVLVRAAPANAVTFYV).

The protein belongs to the mitochondrial carrier (TC 2.A.29) family.

It localises to the mitochondrion inner membrane. Functionally, acts as a glutamate and glycine mitochondrial transmembrane transporter. This chain is Glutamate/glycine mitochondrial carrier ymc1 (ymc1), found in Schizosaccharomyces pombe (strain 972 / ATCC 24843) (Fission yeast).